Consider the following 251-residue polypeptide: MGKRLRVQRHGRGTPQWRNRGHLRVAPGRYPSPEVLKLDETYEGYVVELKHDPGRWVPLAHIVIPNVADFWIPAAEGMYTGQKVQIGPNAAPVNGNILPLYAIPEGTQIFNVEIRPGDGGKLARSGGAYAILVGKSGNSAIIQLPSGKVKQVNAKARATIGIAAGAGRDEKPLLKAGNAYYKWKAKAKKWPVVRGVAMNAVNHPHGGGNHQSPGYPTTVARNAPPGQKVGHIAARCTGRGCKQAKARLGLK.

The segment covering 1 to 12 (MGKRLRVQRHGR) has biased composition (basic residues). The segment at 1-22 (MGKRLRVQRHGRGTPQWRNRGH) is disordered.

This sequence belongs to the universal ribosomal protein uL2 family. Part of the 50S ribosomal subunit. Forms a bridge to the 30S subunit in the 70S ribosome.

Its function is as follows. One of the primary rRNA binding proteins. Required for association of the 30S and 50S subunits to form the 70S ribosome, for tRNA binding and peptide bond formation. It has been suggested to have peptidyltransferase activity; this is somewhat controversial. Makes several contacts with the 16S rRNA in the 70S ribosome. In Ignicoccus hospitalis (strain KIN4/I / DSM 18386 / JCM 14125), this protein is Large ribosomal subunit protein uL2.